Consider the following 68-residue polypeptide: Molybdenum-pterin-binding protein 3 (68 aa).

The region spanning 2-68 (SISARNQLKG…IKSTDVMILA (67 aa)) is the Mop domain.

Its function is as follows. Binds one mole of molybdenum per mole of protein and contains a pterin. The polypeptide is Molybdenum-pterin-binding protein 3 (mopIII) (Clostridium pasteurianum).